The primary structure comprises 168 residues: Lipoprotein signal peptidase (168 aa).

The next 2 helical transmembrane spans lie at 57–77 and 86–106; these read PKEV…LYVF and FILP…DRIT. Catalysis depends on residues Asp-112 and Asp-138. The chain crosses the membrane as a helical span at residues 131–151; sequence WPIFNIADSAITIGACLLILF.

This sequence belongs to the peptidase A8 family.

It is found in the cell inner membrane. The catalysed reaction is Release of signal peptides from bacterial membrane prolipoproteins. Hydrolyzes -Xaa-Yaa-Zaa-|-(S,diacylglyceryl)Cys-, in which Xaa is hydrophobic (preferably Leu), and Yaa (Ala or Ser) and Zaa (Gly or Ala) have small, neutral side chains.. It functions in the pathway protein modification; lipoprotein biosynthesis (signal peptide cleavage). Its function is as follows. This protein specifically catalyzes the removal of signal peptides from prolipoproteins. The sequence is that of Lipoprotein signal peptidase from Chlorobium phaeobacteroides (strain DSM 266 / SMG 266 / 2430).